A 794-amino-acid chain; its full sequence is EVI5-like protein (794 aa).

Residues 1-30 (MASPTLSPDSSSQEALSAPTCSPTSDSENL) are compositionally biased toward polar residues. Disordered stretches follow at residues 1–36 (MASPTLSPDSSSQEALSAPTCSPTSDSENLSPDELE) and 49–75 (EADSKSMRSMNGSRRNSGSSLVSSSSA). Over residues 55–75 (MRSMNGSRRNSGSSLVSSSSA) the composition is skewed to low complexity. A Rab-GAP TBC domain is found at 115–300 (GIPHHFRAIV…RVFDIFMYEG (186 aa)). Coiled coils occupy residues 358–449 (KKMK…QQEN) and 569–709 (EAQA…LKGP). Phosphoserine is present on S685. The tract at residues 766–794 (LERPAKDSEGSSDSDADELAAPYSQGLDN) is disordered.

As to quaternary structure, may interact with RAB10.

In terms of biological role, functions as a GTPase-activating protein (GAP) with a broad specificity. This Homo sapiens (Human) protein is EVI5-like protein (EVI5L).